A 175-amino-acid chain; its full sequence is MASRKAGTRGKVAATKQAQRGSSNVFSMFEQAQIQEFKEAFSCIDQNRDGIICKADLRETYSQLGKVSVPEEELDAMLQEGKGPINFTVFLTLFGEKLNGTDPEEAILSAFRMFDPSGKGVVNKDEFKQLLLTQADKFSPAEVEQMFALTPMDLAGNIDYKSLCYIITHGDEKEE.

The residue at position 2 (Ala2) is an N-acetylalanine. Residues Ser22 and Ser23 each carry the phosphoserine modification. EF-hand domains lie at 32-67, 102-137, and 138-173; these read AQIQ…LGKV, DPEE…QADK, and FSPA…GDEK. Positions 45, 47, 49, and 56 each coordinate Ca(2+).

In terms of assembly, myosin is a hexamer of 2 heavy chains and 4 light chains. Predominantly expressed in adult atrial muscle.

This is Myosin regulatory light chain 2, atrial isoform (MYL7) from Homo sapiens (Human).